The following is a 236-amino-acid chain: MATTHLDVCAVVPAAGFGRRMQTECPKQYLSIGNQTILEHSVHALLAHPRVKRVVIAISPGDSRFAQLPLANHPRITVVDGGEERADSVLAGLKAAGDAQWVLVHDAARPCLHQDDLARLLALSETSRTGGILAAPVRDTMKRAEPGKNAIAHTVDRNGLWHALTPQFFPRELLHDCLTRALNEGATITDEASALEYCGFHPQLVEGRADNIKVTRPEDLALAEFYLTRTIHQENT.

The protein belongs to the IspD/TarI cytidylyltransferase family. IspD subfamily. In terms of assembly, homodimer.

It catalyses the reaction 2-C-methyl-D-erythritol 4-phosphate + CTP + H(+) = 4-CDP-2-C-methyl-D-erythritol + diphosphate. It participates in isoprenoid biosynthesis; isopentenyl diphosphate biosynthesis via DXP pathway; isopentenyl diphosphate from 1-deoxy-D-xylulose 5-phosphate: step 2/6. Catalyzes the formation of 4-diphosphocytidyl-2-C-methyl-D-erythritol from CTP and 2-C-methyl-D-erythritol 4-phosphate (MEP). The sequence is that of 2-C-methyl-D-erythritol 4-phosphate cytidylyltransferase from Escherichia coli O45:K1 (strain S88 / ExPEC).